A 746-amino-acid polypeptide reads, in one-letter code: Ferrienterobactin receptor (746 aa).

A signal peptide spans 1-22 (MNKKIHSLALLVNLGIYGVAQA). A TonB box motif is present at residues 34 to 41 (DTIVVTAA). One can recognise a TBDR plug domain in the interval 42–169 (EQNLQAPGVS…AGGVVNIITK (128 aa)). A disordered region spans residues 76–96 (GVNLTGNSTSGQRGNNRQIDI). Over residues 79–93 (LTGNSTSGQRGNNRQ) the composition is skewed to polar residues. In terms of domain architecture, TBDR beta-barrel spans 174–746 (EWHGSWDAYF…TWYMSVNTHF (573 aa)). Positions 729–746 (YTYNEPGRTWYMSVNTHF) match the TonB C-terminal box motif.

The protein belongs to the TonB-dependent receptor family.

It localises to the cell outer membrane. In terms of biological role, this protein is involved in the initial step of iron uptake by binding ferrienterobactin (Fe-ENT), an iron chelatin siderophore that allows E.coli to extract iron from the environment. FepA also acts as a receptor for colicins B and D. This Escherichia coli (strain K12) protein is Ferrienterobactin receptor (fepA).